Reading from the N-terminus, the 2769-residue chain is Thyroglobulin (2769 aa).

An N-terminal signal peptide occupies residues 1-19 (MALALWVFGLLDLICLASA). An Iodotyrosine; alternate modification is found at Tyr24. Position 24 is a sulfotyrosine; alternate (Tyr24). Residue Tyr24 is modified to Thyroxine; alternate. Tyr24 is modified (triiodothyronine; alternate). Thyroglobulin type-1 domains are found at residues 31–92 (LRPC…PAAC), 93–160 (LSFC…PARC), 161–297 (PRSC…RFRC), and 298–358 (PTKC…PPSC). 8 disulfides stabilise this stretch: Cys34/Cys52, Cys63/Cys70, Cys72/Cys92, Cys96/Cys120, Cys131/Cys138, Cys140/Cys160, Cys164/Cys183, and Cys194/Cys235. Tyr108 is modified (iodotyrosine). The N-linked (GlcNAc...) (complex) asparagine; alternate glycan is linked to Asn110. The N-linked (GlcNAc...) (hybrid) asparagine; alternate glycan is linked to Asn110. Tyr149 is modified (iodotyrosine; alternate). The residue at position 149 (Tyr149) is a Diiodotyrosine; alternate. Iodotyrosine occurs at positions 234 and 258. 9 cysteine pairs are disulfide-bonded: Cys301–Cys319, Cys330–Cys336, Cys338–Cys358, Cys364–Cys619, Cys408–Cys607, Cys630–Cys635, Cys637–Cys657, Cys661–Cys686, and Cys697–Cys702. 2 N-linked (GlcNAc...) (complex) asparagine; alternate glycosylation sites follow: Asn483 and Asn495. Residues Asn483 and Asn495 are each glycosylated (N-linked (GlcNAc...) (hybrid) asparagine; alternate). Thyroglobulin type-1 domains follow at residues 604 to 657 (SQGC…RPRC), 658 to 725 (PTEC…PKKC), 726 to 921 (PSPC…VPAC), 922 to 1073 (PGSC…IPQC), 1074 to 1145 (PTSC…SAQC), and 1146 to 1210 (PSLC…QPAC). Position 703 is an iodotyrosine; alternate (Tyr703). Tyr703 is subject to Thyroxine; alternate. Position 703 is a triiodothyronine; alternate (Tyr703). Diiodotyrosine; alternate is present on Tyr703. 16 disulfides stabilise this stretch: Cys704/Cys725, Cys729/Cys762, Cys773/Cys898, Cys900/Cys921, Cys925/Cys1031, Cys1042/Cys1049, Cys1051/Cys1073, Cys1077/Cys1108, Cys1126/Cys1145, Cys1149/Cys1169, Cys1181/Cys1188, Cys1190/Cys1210, Cys1215/Cys1264, Cys1231/Cys1245, Cys1306/Cys1356, and Cys1331/Cys1347. Iodotyrosine is present on Tyr784. Asn853 carries N-linked (GlcNAc...) (complex) asparagine; alternate glycosylation. N-linked (GlcNAc...) (hybrid) asparagine; alternate glycosylation is present at Asn853. Residue Tyr866 is modified to Iodotyrosine; alternate. Tyr866 bears the Diiodotyrosine; alternate mark. Tyr883 bears the Diiodotyrosine mark. The N-linked (GlcNAc...) (complex) asparagine; alternate glycan is linked to Asn947. N-linked (GlcNAc...) (hybrid) asparagine; alternate glycosylation occurs at Asn947. Tyr992 is modified (iodotyrosine; alternate). The residue at position 992 (Tyr992) is a Diiodotyrosine; alternate. Asn1140 is a glycosylation site (N-linked (GlcNAc...) (complex) asparagine; alternate). Residue Asn1140 is glycosylated (N-linked (GlcNAc...) (hybrid) asparagine; alternate). At Tyr1310 the chain carries Iodotyrosine. The residue at position 1310 (Tyr1310) is a Thyroxine. N-linked (GlcNAc...) (high mannose) asparagine glycosylation is present at Asn1365. 13 disulfide bridges follow: Cys1441-Cys1461, Cys1464-Cys1475, Cys1478-Cys1492, Cys1495-Cys1512, Cys1516-Cys1525, Cys1545-Cys1567, Cys1605-Cys1629, Cys1609-Cys1615, Cys1641-Cys1664, Cys1726-Cys1751, Cys1730-Cys1736, Cys1735-Cys1836, and Cys1762-Cys1779. Type II repeat units follow at residues 1458–1471 (ALGCVKCPEGSYFQ), 1472–1488 (DEQCIPCPAGFYQEQAG), and 1489–1505 (SLACVPCPEGRTTVYAG). Tyr1469 is modified (iodotyrosine; alternate). The residue at position 1469 (Tyr1469) is a Diiodotyrosine; alternate. One can recognise a Thyroglobulin type-1 11 domain in the interval 1513–1567 (VTDCQKNEVGLQCDQDSQYRASQRDRTSGKAFCVDGEGRRLPWTEAEAPLVDAQC). The Type IIIA repeat unit spans residues 1605-1725 (CLADCALDEA…GASLAEVHLF (121 aa)). The Type IIIB repeat unit spans residues 1726 to 1893 (CLLACDHDSC…LFSLQQANLW (168 aa)). Residue Asn1776 is glycosylated (N-linked (GlcNAc...) (complex) asparagine; alternate). N-linked (GlcNAc...) (hybrid) asparagine; alternate glycosylation is present at Asn1776. Over residues 1827–1842 (MGSRSESMGCRRDTEP) the composition is skewed to basic and acidic residues. A disordered region spans residues 1827–1851 (MGSRSESMGCRRDTEPRPASPSETD). An N-linked (GlcNAc...) (complex) asparagine; alternate glycan is attached at Asn1870. Asn1870 carries N-linked (GlcNAc...) (hybrid) asparagine; alternate glycosylation. 7 disulfide bridges follow: Cys1894/Cys1920, Cys1898/Cys1905, Cys1929/Cys1940, Cys1997/Cys2025, Cys2001/Cys2007, Cys2006/Cys2077, and Cys2036/Cys2049. The stretch at 1894-1996 (CLSRCAGEPS…DKSISSGFFE (103 aa)) is one Type IIIA repeat. The stretch at 1997-2130 (CERLCDMDPC…VGNFSAARDR (134 aa)) is one Type IIIB repeat. Residue Asn2014 is glycosylated (N-linked (GlcNAc...) (high mannose) asparagine). An N-linked (GlcNAc...) (high mannose) asparagine glycan is attached at Asn2123. Intrachain disulfides connect Cys2131–Cys2155, Cys2135–Cys2141, and Cys2164–Cys2173. The Type IIIA repeat unit spans residues 2131-2188 (CLWECSRHQDCLVTTLQTQPGAVRCMFYADTQSCTHSLQAQNCRLLLHEEATYIYRKP). Iodotyrosine is present on Tyr2185. The cholinesterase-like (ChEL) stretch occupies residues 2189–2769 (NIPLPGFGTS…PELASKTYSK (581 aa)). A glycan (N-linked (GlcNAc...) (complex) asparagine; alternate) is linked at Asn2251. An N-linked (GlcNAc...) (hybrid) asparagine; alternate glycan is attached at Asn2251. Asn2296 carries N-linked (GlcNAc...) (high mannose) asparagine glycosylation. Cys2443 and Cys2454 are joined by a disulfide. Residue Tyr2541 is modified to Thyroxine. Tyr2574 is modified (iodotyrosine; alternate). A Thyroxine; alternate modification is found at Tyr2574. The residue at position 2574 (Tyr2574) is a Triiodothyronine; alternate. Tyr2574 carries the post-translational modification Diiodotyrosine; alternate. Residues Tyr2588 and Tyr2618 each carry the iodotyrosine modification. Cys2592 and Cys2716 are disulfide-bonded. Position 2698 is a diiodotyrosine (Tyr2698). A disordered region spans residues 2730–2769 (ADETKDGPSADSEEEDQPAGSGLTEDLLGLPELASKTYSK). The residue at position 2767 (Tyr2767) is an Iodotyrosine; alternate. At Tyr2767 the chain carries Thyroxine; alternate. Tyr2767 carries the triiodothyronine; alternate modification. Tyr2767 bears the Diiodotyrosine; alternate mark.

This sequence belongs to the type-B carboxylesterase/lipase family. As to quaternary structure, monomer. Homodimer (via ChEL region); occurs in the endoplasmic reticulum and is required for export to the Golgi apparatus. Homooligomer; disulfide-linked; stored in this form in the thyroid follicle lumen. In terms of processing, iodinated on tyrosine residues by TPO. There are 4 pairs of iodinated tyrosines used for coupling: acceptor Tyr-24 is coupled to donor Tyr-149 or Tyr-234, acceptor Tyr-2574 is coupled to donor Tyr-2541, acceptor Tyr-2767 in monomer 1 is coupled to donor Tyr-2767 in monomer 2 and acceptor Tyr-1310 in monomer 1 is coupled to donor Tyr-108 in monomer 2. Post-translationally, sulfated tyrosines are desulfated during iodination. Undergoes sequential proteolysis by cathepsins to release thyroxine (T4) and triiodothyronine (T3) hormones. In the thyroid follicle lumen, cross-linked TG (storage form) is solubilized by limited proteolysis mediated by cathepsins CTSB and/or CTSL. Partially cleaved TG is further processed by CTSK/cathepsin K and/or CTSL resulting in the release of T4. Following endocytosis, further processing occurs leading to the release of T3 and more T4 hormones. As to expression, specifically expressed in the thyroid gland.

It is found in the secreted. Its function is as follows. Acts as a substrate for the production of iodinated thyroid hormones thyroxine (T4) and triiodothyronine (T3). The synthesis of T3 and T4 involves iodination of selected tyrosine residues of TG/thyroglobulin followed by their oxidative coupling. Following TG re-internalization and lysosomal-mediated proteolysis, T3 and T4 are released from the polypeptide backbone leading to their secretion into the bloodstream. One dimer produces 7 thyroid hormone molecules. The chain is Thyroglobulin (TG) from Bos taurus (Bovine).